We begin with the raw amino-acid sequence, 63 residues long: Conotoxin Cal6.28 (63 aa).

The N-terminal stretch at 1–22 (MKLTCVLIVAVLILTACQVIAA) is a signal peptide. Intrachain disulfides connect Cys-34/Cys-45, Cys-37/Cys-51, and Cys-44/Cys-58.

The protein belongs to the conotoxin O1 superfamily. Expressed by the venom duct.

The protein localises to the secreted. Its function is as follows. Probable neurotoxin. This Californiconus californicus (California cone) protein is Conotoxin Cal6.28.